A 628-amino-acid polypeptide reads, in one-letter code: LRR receptor kinase SERK2 (628 aa).

The first 31 residues, 1 to 31 (MAEARLLRRRRLCLAVPFVWVVAVAVSRVGA), serve as a signal peptide directing secretion. LRR repeat units follow at residues 97–121 (LKNL…LGNL), 123–144 (NLVS…TLGQ), 145–169 (LYKL…LTNI), and 170–194 (TTLQ…SFSL). Residues asparagine 109, asparagine 120, asparagine 133, asparagine 155, asparagine 168, and asparagine 181 are each glycosylated (N-linked (GlcNAc...) asparagine). The helical transmembrane segment at 243-263 (AIAGGVAAAAALLFAVPAIGF) threads the bilayer. Threonine 303 is modified (phosphothreonine). The Protein kinase domain occupies 306–593 (FSNKNILGRG…GLAERWEEWQ (288 aa)). Position 312-320 (312-320 (LGRGGFGKV)) interacts with ATP. Residue serine 329 is modified to Phosphoserine. Position 334 (lysine 334) interacts with ATP. Position 350 is a phosphothreonine (threonine 350). Residues serine 356 and serine 387 each carry the phosphoserine modification. Aspartate 433 functions as the Proton acceptor in the catalytic mechanism. Phosphothreonine is present on residues threonine 463, threonine 466, and threonine 472. A Phosphoserine modification is found at serine 615. Threonine 616 bears the Phosphothreonine mark. Serine 625 carries the phosphoserine modification.

The protein belongs to the protein kinase superfamily. Ser/Thr protein kinase family. In terms of assembly, interacts with BRI1. Interacts with XA21, XA26/XA3 and FLS2. In terms of processing, autophosphorylated on serine and threonine residues. As to expression, expressed in flag leaves. Expressed in roots, shoot apex, leaf blades, leaf sheaths, panicles and flowers. Expressed leaves, stems, sheaths and flowers.

The protein localises to the cell membrane. It carries out the reaction L-seryl-[protein] + ATP = O-phospho-L-seryl-[protein] + ADP + H(+). The catalysed reaction is L-threonyl-[protein] + ATP = O-phospho-L-threonyl-[protein] + ADP + H(+). In terms of biological role, LRR receptor kinase involved in positive regulation of somatic embryogenesis and defense response against the rice blast fungus pathogen Magnaporthe oryzae. Involved in the positive regulation of receptor kinase-mediated immunity. Required for immunity mediated by the LRR receptor kinases XA21 and XA26/XA3 which recognize effectors from the bacterial pathogen Xanthomonas oryzae pv. oryzae (Xoo). Required for the immune response mediated by the LRR receptor kinase FLS2 which recognizes specifically the bacterial flagellin (flg22) effector. Kinase activity and direct interaction with the immune receptors is critical for their function. Involved in the regulation of plant growth through the brassinosteroid (BR) signaling pathway. The protein is LRR receptor kinase SERK2 of Oryza sativa subsp. japonica (Rice).